Reading from the N-terminus, the 222-residue chain is UPF0758 protein Cpar_0627 (222 aa).

One can recognise an MPN domain in the interval 100–222 (KIQGAQDVFE…WFSFRDHSLL (123 aa)). The Zn(2+) site is built by histidine 171, histidine 173, and aspartate 184. The JAMM motif signature appears at 171 to 184 (HNHPSGDVQPSNAD).

Belongs to the UPF0758 family.

This Chlorobaculum parvum (strain DSM 263 / NCIMB 8327) (Chlorobium vibrioforme subsp. thiosulfatophilum) protein is UPF0758 protein Cpar_0627.